A 549-amino-acid polypeptide reads, in one-letter code: Oxygen-dependent choline dehydrogenase (549 aa).

4–33 (DFVIIGSGSAGSAMAYRLSENGRYSVIVIE) contributes to the FAD binding site. H465 acts as the Proton acceptor in catalysis.

This sequence belongs to the GMC oxidoreductase family. Requires FAD as cofactor.

The enzyme catalyses choline + A = betaine aldehyde + AH2. It carries out the reaction betaine aldehyde + NAD(+) + H2O = glycine betaine + NADH + 2 H(+). The protein operates within amine and polyamine biosynthesis; betaine biosynthesis via choline pathway; betaine aldehyde from choline (cytochrome c reductase route): step 1/1. Its function is as follows. Involved in the biosynthesis of the osmoprotectant glycine betaine. Catalyzes the oxidation of choline to betaine aldehyde and betaine aldehyde to glycine betaine at the same rate. The chain is Oxygen-dependent choline dehydrogenase from Brucella suis biovar 1 (strain 1330).